A 206-amino-acid chain; its full sequence is Halorhodopsin (206 aa).

The helical transmembrane segment at 1-15 threads the bilayer; the sequence is IALAGLSILLFVYMG. Residues 16–21 are Cytoplasmic-facing; the sequence is RNVEDP. A helical membrane pass occupies residues 22–45; sequence RAQLIFVATLMVPLVSISSYTGLV. Over 46–75 the chain is Extracellular; sequence SGLTVGFLEMPAGHALAGMGAGPEGGVFTP. The chain crosses the membrane as a helical span at residues 76 to 97; the sequence is WGRYLTWAFSTPMILIALGLLA. Residues 98–100 lie on the Cytoplasmic side of the membrane; sequence GSN. A helical membrane pass occupies residues 101 to 124; the sequence is MSKLFTAVVADVGMCITGLAAALT. Residues 125–127 are Extracellular-facing; sequence TSS. Residues 128–150 traverse the membrane as a helical segment; the sequence is YLLRWVWYGISCAFFVVVLYILL. The Cytoplasmic segment spans residues 151-162; the sequence is AEWAKDAEVAGT. A helical transmembrane segment spans residues 163–186; sequence ADIFNTLKVLTVVLWLGYPIFWAL. At 187-195 the chain is on the extracellular side; the sequence is GAEGLAVLD. The chain crosses the membrane as a helical span at residues 196–206; it reads IAITSWAYSGM.

It belongs to the archaeal/bacterial/fungal opsin family.

It is found in the cell membrane. In terms of biological role, light-driven chloride pump. This is Halorhodopsin (hop) from Halobacterium halobium (strain mex).